A 391-amino-acid chain; its full sequence is MKITDLELHAVGIPRHTGFVNKHVIVKIHTDEGLTGIGEMSDFSHLPLYSVDLHDLKQGLLSILLGQNPFDLMKINKELTDNFPETMYYYEKGSFIRNGIDNALHDLCAKYLDISVSDFLGGRVKEKIKVCYPIFRHRFSEEVESNLDVVRQKLEQGFDVFRLYVGKNLDADEEFLSRVKEEFGSRVRIKSYDFSHLLNWKDAHRAIKRLTKYDLGLEMIESPAPRNDFDGLYQLRLKTDYPISEHVWSFKQQQEMIKKDAIDIFNISPVFIGGLTSAKKAAYAAEVASKDVVLGTTQELSVGTAAMAHLGCSLTNINHTSDPTGPELYVGDVVKNRVTYKDGYLYAPDRSVKGLGIELDESLLAKYQVPDLSWDNVTVHQLQDRTADTKS.

Arginine 15 contacts substrate. The Mg(2+) site is built by aspartate 42 and histidine 45. A substrate-binding site is contributed by tyrosine 89. Catalysis depends on tyrosine 90, which acts as the Proton donor. Residue tyrosine 164 is the Proton acceptor of the active site. Residues aspartate 193, glutamate 221, and histidine 246 each coordinate Mg(2+). Threonine 296 is a substrate binding site. Threonine 297 lines the Mg(2+) pocket. Arginine 385 lines the substrate pocket.

This sequence belongs to the mandelate racemase/muconate lactonizing enzyme family. The cofactor is Mg(2+).

It carries out the reaction galactarate = (2S,3R)-dihydroxy-5-oxohexanedioate + H2O. Functionally, catalyzes the regioselective dehydration of galactarate into 2-keto-D-threo-4,5-dihydroxyadipate ((2S,3R)-dihydroxy-5-oxohexanedioate). Is not active on other acid sugars. This chain is Galactarate dehydratase (D-threo-forming), found in Oceanobacillus iheyensis (strain DSM 14371 / CIP 107618 / JCM 11309 / KCTC 3954 / HTE831).